A 275-amino-acid polypeptide reads, in one-letter code: Mitochondrial outer membrane porin (275 aa).

Belongs to the eukaryotic mitochondrial porin (TC 1.B.8.1) family.

The protein localises to the mitochondrion outer membrane. Forms a channel through the cell membrane that allows diffusion of small hydrophilic molecules. The channel adopts an open conformation at low or zero membrane potential and a closed conformation at potentials above 30-40 mV. The open state has a weak anion selectivity whereas the closed state is cation-selective. This is Mitochondrial outer membrane porin (VDAC1) from Triticum aestivum (Wheat).